A 221-amino-acid polypeptide reads, in one-letter code: Ependymin-1 (221 aa).

The signal sequence occupies residues 1–21 (MQAFAVAALSIWLCLGATTLA). N-linked (GlcNAc...) asparagine glycosylation is found at asparagine 33, asparagine 73, and asparagine 97.

This sequence belongs to the ependymin family. Binds calcium through the terminal sialic acids. In terms of tissue distribution, EPDs are synthesized in the meninx and secreted in the cerebrospinal fluid.

The protein resides in the secreted. Its function is as follows. May play a role in neural plasticity. May be involved during axon regeneration. In Oncorhynchus mykiss (Rainbow trout), this protein is Ependymin-1 (epd1).